Consider the following 440-residue polypeptide: Ribosomal protein uS12 methylthiotransferase RimO (440 aa).

An MTTase N-terminal domain is found at 1-117; sequence MKIFFISLGC…ITEVIDKVLG (117 aa). Cysteine 10, cysteine 46, cysteine 80, cysteine 154, cysteine 158, and cysteine 161 together coordinate [4Fe-4S] cluster. A Radical SAM core domain is found at 140–370; the sequence is TTGGYYSFLK…MEIQQGIAFE (231 aa). One can recognise a TRAM domain in the interval 373 to 440; it reads ESMVGRKLKV…KEYDLIGTAE (68 aa).

It belongs to the methylthiotransferase family. RimO subfamily. It depends on [4Fe-4S] cluster as a cofactor.

It localises to the cytoplasm. The enzyme catalyses L-aspartate(89)-[ribosomal protein uS12]-hydrogen + (sulfur carrier)-SH + AH2 + 2 S-adenosyl-L-methionine = 3-methylsulfanyl-L-aspartate(89)-[ribosomal protein uS12]-hydrogen + (sulfur carrier)-H + 5'-deoxyadenosine + L-methionine + A + S-adenosyl-L-homocysteine + 2 H(+). In terms of biological role, catalyzes the methylthiolation of an aspartic acid residue of ribosomal protein uS12. This Lachnoclostridium phytofermentans (strain ATCC 700394 / DSM 18823 / ISDg) (Clostridium phytofermentans) protein is Ribosomal protein uS12 methylthiotransferase RimO.